We begin with the raw amino-acid sequence, 332 residues long: Ornithine carbamoyltransferase, catabolic (332 aa).

Carbamoyl phosphate is bound by residues 60-63, Q87, R111, and 138-141; these read STRT and HPTQ. L-ornithine contacts are provided by residues N170, D230, and 234–235; that span reads SM. Carbamoyl phosphate is bound by residues 271 to 272 and R316; that span reads CL.

This sequence belongs to the aspartate/ornithine carbamoyltransferase superfamily. OTCase family.

Its subcellular location is the cytoplasm. It carries out the reaction carbamoyl phosphate + L-ornithine = L-citrulline + phosphate + H(+). The protein operates within amino-acid degradation; L-arginine degradation via ADI pathway; carbamoyl phosphate from L-arginine: step 2/2. Its function is as follows. Reversibly catalyzes the transfer of the carbamoyl group from carbamoyl phosphate (CP) to the N(epsilon) atom of ornithine (ORN) to produce L-citrulline. The protein is Ornithine carbamoyltransferase, catabolic (arcB) of Bacillus cereus (strain ATCC 14579 / DSM 31 / CCUG 7414 / JCM 2152 / NBRC 15305 / NCIMB 9373 / NCTC 2599 / NRRL B-3711).